We begin with the raw amino-acid sequence, 358 residues long: Glutamate 5-kinase (358 aa).

Position 9 (Lys-9) interacts with ATP. 3 residues coordinate substrate: Ser-49, Asp-136, and Asn-148. ATP is bound by residues 168 to 169 (TD) and 210 to 216 (TGGMTTK). The region spanning 275-353 (DAAVEVDAGA…RAEGVLIHRN (79 aa)) is the PUA domain.

Belongs to the glutamate 5-kinase family.

It is found in the cytoplasm. It carries out the reaction L-glutamate + ATP = L-glutamyl 5-phosphate + ADP. The protein operates within amino-acid biosynthesis; L-proline biosynthesis; L-glutamate 5-semialdehyde from L-glutamate: step 1/2. Its function is as follows. Catalyzes the transfer of a phosphate group to glutamate to form L-glutamate 5-phosphate. The sequence is that of Glutamate 5-kinase from Streptococcus suis (strain 05ZYH33).